The chain runs to 219 residues: ATP-dependent Clp protease proteolytic subunit 4 (219 aa).

Ser125 (nucleophile) is an active-site residue. The active site involves His150.

The protein belongs to the peptidase S14 family. As to quaternary structure, fourteen ClpP subunits assemble into 2 heptameric rings which stack back to back to give a disk-like structure with a central cavity, resembling the structure of eukaryotic proteasomes.

The protein localises to the cytoplasm. The catalysed reaction is Hydrolysis of proteins to small peptides in the presence of ATP and magnesium. alpha-casein is the usual test substrate. In the absence of ATP, only oligopeptides shorter than five residues are hydrolyzed (such as succinyl-Leu-Tyr-|-NHMec, and Leu-Tyr-Leu-|-Tyr-Trp, in which cleavage of the -Tyr-|-Leu- and -Tyr-|-Trp bonds also occurs).. In terms of biological role, cleaves peptides in various proteins in a process that requires ATP hydrolysis. Has a chymotrypsin-like activity. Plays a major role in the degradation of misfolded proteins. In Prochlorococcus marinus (strain MIT 9312), this protein is ATP-dependent Clp protease proteolytic subunit 4.